A 609-amino-acid polypeptide reads, in one-letter code: WD repeat-containing protein 1 (609 aa).

WD repeat units lie at residues 6-47 (EIKK…IRNI), 50-89 (PAIA…IWDT), 95-137 (LLKY…LWDS), 140-178 (SVGE…FFEG), 182-220 (KFKF…IYDG), 226-265 (VCAL…IWDV), 272-308 (STFN…YLDK), 313-353 (KPLR…YWDS), 360-410 (GFSG…KMDV), 434-476 (MKDK…LYSI), 482-520 (KSDD…VFSV), 525-563 (VEHN…VWTV), and 568-606 (TRIK…EWSI).

This sequence belongs to the WD repeat AIP1 family.

The protein localises to the cytoplasm. Its subcellular location is the cytoskeleton. In terms of biological role, induces disassembly of actin filaments in conjunction with ADF/cofilin family proteins. Enhances cofilin-mediated actin severing. This Gallus gallus (Chicken) protein is WD repeat-containing protein 1 (WDR1).